We begin with the raw amino-acid sequence, 254 residues long: Protein GltF (254 aa).

Residues 1 to 25 (MFFKKNLTTAAICAALSVAAFSAMA) form the signal peptide. The helical transmembrane segment at 213–229 (PVAITAVTFPLLIDAAV) threads the bilayer.

It to E.coli YhcF.

Its subcellular location is the cell membrane. Involved in induction of the so-called NTR enzymes in response to nitrogen deprivation, as well as in glutamate biosynthesis. May mediate the glutamate-dependent repression of the GLT operon. The protein is Protein GltF (gltF) of Escherichia coli (strain K12).